The sequence spans 211 residues: MTLTIALTKGRTETQVLPLLAAAGIHCEAIQAKSRRLIFADDPSFHFILVKAPEVLTYLNHGTVDIGIVGSDILAEQGHRQFDMLDLNTGRCRFILASTADFDPKQTKRKLIATKYPHIAQQYFQKQGEDVEIIKIEGSVELAPLTGMADAIVDITETGTTLRENHLKVFAELASVSTHLVVNRLALKQKRTEIYQLIQSLQKVRPQEASL.

Belongs to the ATP phosphoribosyltransferase family. Short subfamily. In terms of assembly, heteromultimer composed of HisG and HisZ subunits.

Its subcellular location is the cytoplasm. It catalyses the reaction 1-(5-phospho-beta-D-ribosyl)-ATP + diphosphate = 5-phospho-alpha-D-ribose 1-diphosphate + ATP. It participates in amino-acid biosynthesis; L-histidine biosynthesis; L-histidine from 5-phospho-alpha-D-ribose 1-diphosphate: step 1/9. Catalyzes the condensation of ATP and 5-phosphoribose 1-diphosphate to form N'-(5'-phosphoribosyl)-ATP (PR-ATP). Has a crucial role in the pathway because the rate of histidine biosynthesis seems to be controlled primarily by regulation of HisG enzymatic activity. The protein is ATP phosphoribosyltransferase of Lacticaseibacillus paracasei (strain ATCC 334 / BCRC 17002 / CCUG 31169 / CIP 107868 / KCTC 3260 / NRRL B-441) (Lactobacillus paracasei).